A 560-amino-acid polypeptide reads, in one-letter code: Beta-hexosaminidase subunit B1 (560 aa).

Residues 1-25 (MIILKRNIVFLLIIIIVLGIFIATS) form the signal peptide. 7 N-linked (GlcNAc...) asparagine glycosylation sites follow: Asn59, Asn69, Asn81, Asn99, Asn161, Asn293, and Asn346. Glu359 (proton donor) is an active-site residue. Residues Asn366, Asn436, Asn472, and Asn547 are each glycosylated (N-linked (GlcNAc...) asparagine).

Belongs to the glycosyl hydrolase 20 family.

The protein localises to the lysosome. It carries out the reaction Hydrolysis of terminal non-reducing N-acetyl-D-hexosamine residues in N-acetyl-beta-D-hexosaminides.. Responsible for the degradation of GM2 gangliosides, and a variety of other molecules containing terminal N-acetyl hexosamines. The protein is Beta-hexosaminidase subunit B1 (hexb1) of Dictyostelium discoideum (Social amoeba).